The sequence spans 175 residues: Co-chaperone protein HscB homolog (175 aa).

The region spanning 2–76 is the J domain; that stretch reads NYFALFNLTP…RAEHMLELRG (75 aa).

It belongs to the HscB family. As to quaternary structure, interacts with HscA and stimulates its ATPase activity.

Functionally, co-chaperone involved in the maturation of iron-sulfur cluster-containing proteins. Seems to help targeting proteins to be folded toward HscA. The polypeptide is Co-chaperone protein HscB homolog (Pseudoalteromonas atlantica (strain T6c / ATCC BAA-1087)).